A 310-amino-acid polypeptide reads, in one-letter code: Uridine phosphorylase 1 (310 aa).

Residues Gly60, Arg94, and Arg138–Thr141 each bind phosphate. Residues Ser142–Gly143 and Gln217–Arg219 each bind uridine.

Belongs to the PNP/UDP phosphorylase family. Homodimer.

It catalyses the reaction uridine + phosphate = alpha-D-ribose 1-phosphate + uracil. The catalysed reaction is 2'-deoxyuridine + phosphate = 2-deoxy-alpha-D-ribose 1-phosphate + uracil. It functions in the pathway pyrimidine metabolism; UMP biosynthesis via salvage pathway; uracil from uridine (phosphorylase route): step 1/1. Functionally, catalyzes the reversible phosphorylytic cleavage of uridine to uracil and ribose-1-phosphate which can then be utilized as carbon and energy sources or in the rescue of pyrimidine bases for nucleotide synthesis. Shows broad substrate specificity and can also accept deoxyuridine and other analogous compounds. The polypeptide is Uridine phosphorylase 1 (Homo sapiens (Human)).